Reading from the N-terminus, the 312-residue chain is Ribosomal RNA small subunit methyltransferase H (312 aa).

Residues 35-37 (GGH), Asp-55, Phe-79, Asp-100, and Gln-107 contribute to the S-adenosyl-L-methionine site.

It belongs to the methyltransferase superfamily. RsmH family.

It is found in the cytoplasm. The enzyme catalyses cytidine(1402) in 16S rRNA + S-adenosyl-L-methionine = N(4)-methylcytidine(1402) in 16S rRNA + S-adenosyl-L-homocysteine + H(+). Its function is as follows. Specifically methylates the N4 position of cytidine in position 1402 (C1402) of 16S rRNA. This Azoarcus sp. (strain BH72) protein is Ribosomal RNA small subunit methyltransferase H.